The sequence spans 284 residues: Acetyl-coenzyme A carboxylase carboxyl transferase subunit beta (284 aa).

The 258-residue stretch at Leu-27–Val-284 folds into the CoA carboxyltransferase N-terminal domain. Residues Cys-31, Cys-34, Cys-50, and Cys-52 each contribute to the Zn(2+) site. A C4-type zinc finger spans residues Cys-31–Cys-52.

Belongs to the AccD/PCCB family. In terms of assembly, acetyl-CoA carboxylase is a heterohexamer composed of biotin carboxyl carrier protein (AccB), biotin carboxylase (AccC) and two subunits each of ACCase subunit alpha (AccA) and ACCase subunit beta (AccD). The cofactor is Zn(2+).

The protein resides in the cytoplasm. The enzyme catalyses N(6)-carboxybiotinyl-L-lysyl-[protein] + acetyl-CoA = N(6)-biotinyl-L-lysyl-[protein] + malonyl-CoA. Its pathway is lipid metabolism; malonyl-CoA biosynthesis; malonyl-CoA from acetyl-CoA: step 1/1. In terms of biological role, component of the acetyl coenzyme A carboxylase (ACC) complex. Biotin carboxylase (BC) catalyzes the carboxylation of biotin on its carrier protein (BCCP) and then the CO(2) group is transferred by the transcarboxylase to acetyl-CoA to form malonyl-CoA. The sequence is that of Acetyl-coenzyme A carboxylase carboxyl transferase subunit beta from Exiguobacterium sp. (strain ATCC BAA-1283 / AT1b).